The sequence spans 91 residues: MARNVFCTYLNQEAEGLDFQLYPGELGKRIFDNISKQAWAEWMKKQTMLVNEKKLNMMNSEHRQLLEQEMTNFLFEGKDVHIEGYVPPTEK.

The protein belongs to the Fe(2+)-trafficking protein family.

Its function is as follows. Could be a mediator in iron transactions between iron acquisition and iron-requiring processes, such as synthesis and/or repair of Fe-S clusters in biosynthetic enzymes. This chain is Probable Fe(2+)-trafficking protein, found in Histophilus somni (strain 129Pt) (Haemophilus somnus).